Here is an 840-residue protein sequence, read N- to C-terminus: Wings apart-like protein 2 (840 aa).

Disordered stretches follow at residues 1–37, 56–78, and 532–594; these read MMER…EPVD, SDND…FGSN, and FDLE…DHHV. The segment covering 546–557 has biased composition (basic residues); the sequence is KQKKSKGQKRKG. The span at 558–567 shows a compositional bias: basic and acidic residues; the sequence is SYRDKKDERS. A compositionally biased stretch (polar residues) spans 569-585; it reads QLFSSQEESNHGLNSQE. Positions 764-819 constitute a WAPL domain; sequence KEAEKMIVEAYSALLLAFLSTESRSIRNAIRDYLPKRDMAILVPVLDRFVAFHTTL.

The protein belongs to the WAPL family. As to quaternary structure, interacts with the cohesin complex throughout the cell cycle. As to expression, expressed in roots, leaves, buds and siliques.

The protein resides in the nucleus. It is found in the chromosome. Functionally, regulator of sister chromatid cohesion in meiosis which negatively regulates cohesin association with chromatin, acting as an antagonist of CTF7. Cohesion ensures that chromosome partitioning is accurate in both meiotic and mitotic cells and plays an important role in DNA repair. Essential for the prophase removal of cohesin during meiosis thus determining the timely release of meiotic cohesion. Important for proper spindle attachment and assembly during meiosis. Helps to prevent abnormal centromere association during prophase I in meiocytes. Required for early embryonic patterning. Also involved in chromosome segregation during mitosis. In Arabidopsis thaliana (Mouse-ear cress), this protein is Wings apart-like protein 2.